The primary structure comprises 371 residues: Protein lifeguard 1 (371 aa).

Residues 1–145 (MSHEKSFLVS…EGPPSYYDNQ (145 aa)) are disordered. Positions 14 to 49 (YPPPNPGYPGGPQPPMPPYAQPPYPGAPYPQPPFQP) are enriched in pro residues. Positions 84–98 (YPQEGYPQGPYPQGG) are enriched in low complexity. A compositionally biased stretch (pro residues) spans 102–114 (GPYPQSPFPPNPY). Helical transmembrane passes span 165–185 (VFLV…VFTF), 197–217 (VWTY…LSCC), 228–248 (LVAL…IASF), 253–273 (AVIM…IFSM), 283–303 (MGVL…CIFI), 307–327 (ILEI…LAVD), and 346–366 (FAAL…LTII).

Belongs to the BI1 family. LFG subfamily.

It localises to the membrane. Its function is as follows. Potential apoptotic regulator. In Homo sapiens (Human), this protein is Protein lifeguard 1 (GRINA).